The following is a 684-amino-acid chain: Threonine--tRNA ligase (684 aa).

The TGS domain maps to 1–66; sequence MTAVASSAPA…DTDVEVTPVA (66 aa). Residues 261 to 567 form a catalytic region; sequence DHRKLGVELD…LTEHYAGAFP (307 aa). Residues cysteine 366, histidine 417, and histidine 544 each contribute to the Zn(2+) site.

This sequence belongs to the class-II aminoacyl-tRNA synthetase family. In terms of assembly, homodimer. The cofactor is Zn(2+).

The protein resides in the cytoplasm. The enzyme catalyses tRNA(Thr) + L-threonine + ATP = L-threonyl-tRNA(Thr) + AMP + diphosphate + H(+). Functionally, catalyzes the attachment of threonine to tRNA(Thr) in a two-step reaction: L-threonine is first activated by ATP to form Thr-AMP and then transferred to the acceptor end of tRNA(Thr). Also edits incorrectly charged L-seryl-tRNA(Thr). The sequence is that of Threonine--tRNA ligase from Mycolicibacterium smegmatis (strain ATCC 700084 / mc(2)155) (Mycobacterium smegmatis).